We begin with the raw amino-acid sequence, 342 residues long: Ketol-acid reductoisomerase (NADP(+)) (342 aa).

Positions 2 to 181 (VKVYYNGDIK…GGARAGVLET (180 aa)) constitute a KARI N-terminal Rossmann domain. NADP(+) is bound by residues 25-28 (YGSQ), R48, S52, and 82-85 (DEQQ). Residue H107 is part of the active site. An NADP(+)-binding site is contributed by G133. In terms of domain architecture, KARI C-terminal knotted spans 182–327 (TFKEETETDL…RKLREMMPFV (146 aa)). Mg(2+) contacts are provided by D190, E194, E226, and E230. Position 251 (S251) interacts with substrate.

The protein belongs to the ketol-acid reductoisomerase family. Requires Mg(2+) as cofactor.

It catalyses the reaction (2R)-2,3-dihydroxy-3-methylbutanoate + NADP(+) = (2S)-2-acetolactate + NADPH + H(+). The catalysed reaction is (2R,3R)-2,3-dihydroxy-3-methylpentanoate + NADP(+) = (S)-2-ethyl-2-hydroxy-3-oxobutanoate + NADPH + H(+). The protein operates within amino-acid biosynthesis; L-isoleucine biosynthesis; L-isoleucine from 2-oxobutanoate: step 2/4. It participates in amino-acid biosynthesis; L-valine biosynthesis; L-valine from pyruvate: step 2/4. Its function is as follows. Involved in the biosynthesis of branched-chain amino acids (BCAA). Catalyzes an alkyl-migration followed by a ketol-acid reduction of (S)-2-acetolactate (S2AL) to yield (R)-2,3-dihydroxy-isovalerate. In the isomerase reaction, S2AL is rearranged via a Mg-dependent methyl migration to produce 3-hydroxy-3-methyl-2-ketobutyrate (HMKB). In the reductase reaction, this 2-ketoacid undergoes a metal-dependent reduction by NADPH to yield (R)-2,3-dihydroxy-isovalerate. The polypeptide is Ketol-acid reductoisomerase (NADP(+)) (Bacillus licheniformis (strain ATCC 14580 / DSM 13 / JCM 2505 / CCUG 7422 / NBRC 12200 / NCIMB 9375 / NCTC 10341 / NRRL NRS-1264 / Gibson 46)).